A 503-amino-acid chain; its full sequence is Anaerobic nitric oxide reductase flavorubredoxin (503 aa).

Positions 30 to 210 are zinc metallo-hydrolase; sequence LQGSSYNSYL…PFSRLVTAKI (181 aa). 6 residues coordinate Fe cation: His79, Glu81, Asp83, His147, Asp166, and His227. The Flavodoxin-like domain maps to 254–393; sequence ITLFYDTMSN…ICREHGREIA (140 aa). FMN is bound by residues 260 to 264 and 342 to 369; these read TMSNN and AFGS…ETTL. One can recognise a Rubredoxin-like domain in the interval 451–502; it reads NGCMQCSVCQWIYDPALGEPMQDVTPGTMWSDVPDSFLCPECGLGKDVFNPI. Positions 456, 459, 489, and 492 each coordinate Fe cation.

The protein in the N-terminal section; belongs to the zinc metallo-hydrolase group 3 family. Homotetramer. Fe cation serves as cofactor. FMN is required as a cofactor.

It is found in the cytoplasm. The protein operates within nitrogen metabolism; nitric oxide reduction. Its function is as follows. Anaerobic nitric oxide reductase; uses NADH to detoxify nitric oxide (NO), protecting several 4Fe-4S NO-sensitive enzymes. Has at least 2 reductase partners, only one of which (NorW, flavorubredoxin reductase) has been identified. NO probably binds to the di-iron center; electrons enter from the NorW at rubredoxin and are transferred sequentially to the FMN center and the di-iron center. Also able to function as an aerobic oxygen reductase. The polypeptide is Anaerobic nitric oxide reductase flavorubredoxin (Pectobacterium carotovorum subsp. carotovorum (strain PC1)).